The following is a 404-amino-acid chain: Cysteine desulfurase IscS (404 aa).

Residues 75–76 (AT), N155, Q183, and 203–205 (SAH) contribute to the pyridoxal 5'-phosphate site. K206 carries the post-translational modification N6-(pyridoxal phosphate)lysine. Residue T243 coordinates pyridoxal 5'-phosphate. The active-site Cysteine persulfide intermediate is C328. C328 contacts [2Fe-2S] cluster.

This sequence belongs to the class-V pyridoxal-phosphate-dependent aminotransferase family. NifS/IscS subfamily. In terms of assembly, homodimer. Forms a heterotetramer with IscU, interacts with other sulfur acceptors. Pyridoxal 5'-phosphate serves as cofactor.

Its subcellular location is the cytoplasm. The catalysed reaction is (sulfur carrier)-H + L-cysteine = (sulfur carrier)-SH + L-alanine. It functions in the pathway cofactor biosynthesis; iron-sulfur cluster biosynthesis. Functionally, master enzyme that delivers sulfur to a number of partners involved in Fe-S cluster assembly, tRNA modification or cofactor biosynthesis. Catalyzes the removal of elemental sulfur atoms from cysteine to produce alanine. Functions as a sulfur delivery protein for Fe-S cluster synthesis onto IscU, an Fe-S scaffold assembly protein, as well as other S acceptor proteins. This is Cysteine desulfurase IscS from Pseudomonas putida (strain GB-1).